A 278-amino-acid polypeptide reads, in one-letter code: Phosphonates import ATP-binding protein PhnC 1 (278 aa).

The ABC transporter domain occupies 5–253; it reads IRVDSLNKTF…FLNELYGAEG (249 aa). 37 to 44 provides a ligand contact to ATP; the sequence is GASGSGKS.

Belongs to the ABC transporter superfamily. Phosphonates importer (TC 3.A.1.9.1) family. In terms of assembly, the complex is composed of two ATP-binding proteins (PhnC), two transmembrane proteins (PhnE) and a solute-binding protein (PhnD).

It is found in the cell inner membrane. The catalysed reaction is phosphonate(out) + ATP + H2O = phosphonate(in) + ADP + phosphate + H(+). In terms of biological role, part of the ABC transporter complex PhnCDE involved in phosphonates import. Responsible for energy coupling to the transport system. In Pseudomonas aeruginosa (strain UCBPP-PA14), this protein is Phosphonates import ATP-binding protein PhnC 1.